Consider the following 83-residue polypeptide: UPF0297 protein Moth_1643 (83 aa).

This sequence belongs to the UPF0297 family.

In Moorella thermoacetica (strain ATCC 39073 / JCM 9320), this protein is UPF0297 protein Moth_1643.